The chain runs to 286 residues: Alpha/beta-gliadin (286 aa).

An N-terminal signal peptide occupies residues 1–20 (MKTFLILVLLAIVATTATTA). A disordered region spans residues 51–120 (LGQQQPFPPQ…QQPISQQQQQ (70 aa)). The span at 56-71 (PFPPQQPYPQPQPFPS) shows a compositional bias: pro residues. The span at 72–92 (QLPYLQLQPFPQPQLPYSQPQ) shows a compositional bias: low complexity. A compositionally biased stretch (pro residues) spans 93 to 104 (PFRPQQPYPQPQ). Residues 105–120 (PQYSQPQQPISQQQQQ) are compositionally biased toward low complexity.

Belongs to the gliadin/glutenin family. In terms of processing, substrate of transglutaminase.

Functionally, gliadin is the major seed storage protein in wheat. The chain is Alpha/beta-gliadin from Triticum aestivum (Wheat).